The sequence spans 480 residues: Methylenetetrahydrofolate--tRNA-(uracil-5-)-methyltransferase TrmFO (480 aa).

Gly15–Gly20 lines the FAD pocket.

The protein belongs to the MnmG family. TrmFO subfamily. It depends on FAD as a cofactor.

It localises to the cytoplasm. The catalysed reaction is uridine(54) in tRNA + (6R)-5,10-methylene-5,6,7,8-tetrahydrofolate + NADH + H(+) = 5-methyluridine(54) in tRNA + (6S)-5,6,7,8-tetrahydrofolate + NAD(+). It carries out the reaction uridine(54) in tRNA + (6R)-5,10-methylene-5,6,7,8-tetrahydrofolate + NADPH + H(+) = 5-methyluridine(54) in tRNA + (6S)-5,6,7,8-tetrahydrofolate + NADP(+). Functionally, catalyzes the folate-dependent formation of 5-methyl-uridine at position 54 (M-5-U54) in all tRNAs. This is Methylenetetrahydrofolate--tRNA-(uracil-5-)-methyltransferase TrmFO from Sinorhizobium medicae (strain WSM419) (Ensifer medicae).